Reading from the N-terminus, the 500-residue chain is Aspartyl/glutamyl-tRNA(Asn/Gln) amidotransferase subunit B (500 aa).

This sequence belongs to the GatB/GatE family. GatB subfamily. Heterotrimer of A, B and C subunits.

The catalysed reaction is L-glutamyl-tRNA(Gln) + L-glutamine + ATP + H2O = L-glutaminyl-tRNA(Gln) + L-glutamate + ADP + phosphate + H(+). It catalyses the reaction L-aspartyl-tRNA(Asn) + L-glutamine + ATP + H2O = L-asparaginyl-tRNA(Asn) + L-glutamate + ADP + phosphate + 2 H(+). Its function is as follows. Allows the formation of correctly charged Asn-tRNA(Asn) or Gln-tRNA(Gln) through the transamidation of misacylated Asp-tRNA(Asn) or Glu-tRNA(Gln) in organisms which lack either or both of asparaginyl-tRNA or glutaminyl-tRNA synthetases. The reaction takes place in the presence of glutamine and ATP through an activated phospho-Asp-tRNA(Asn) or phospho-Glu-tRNA(Gln). This Brucella ovis (strain ATCC 25840 / 63/290 / NCTC 10512) protein is Aspartyl/glutamyl-tRNA(Asn/Gln) amidotransferase subunit B.